The primary structure comprises 159 residues: MKKNKANKNTSGNIAQNKKARHDYFLEDKFEAGLELQGWEIKSIRAGKVNITDAYIIIQNAEAYLVGCRISPLNQASTHVVAAPERARKLLLKKREIDRLMGARDRQGYSIVATSMYWKKCWVKLEIHLAKGKHAHDKRDTLKDKDWQRQKERMMKHSV.

The segment at 138 to 159 is disordered; it reads KRDTLKDKDWQRQKERMMKHSV.

Belongs to the SmpB family.

Its subcellular location is the cytoplasm. Its function is as follows. Required for rescue of stalled ribosomes mediated by trans-translation. Binds to transfer-messenger RNA (tmRNA), required for stable association of tmRNA with ribosomes. tmRNA and SmpB together mimic tRNA shape, replacing the anticodon stem-loop with SmpB. tmRNA is encoded by the ssrA gene; the 2 termini fold to resemble tRNA(Ala) and it encodes a 'tag peptide', a short internal open reading frame. During trans-translation Ala-aminoacylated tmRNA acts like a tRNA, entering the A-site of stalled ribosomes, displacing the stalled mRNA. The ribosome then switches to translate the ORF on the tmRNA; the nascent peptide is terminated with the 'tag peptide' encoded by the tmRNA and targeted for degradation. The ribosome is freed to recommence translation, which seems to be the essential function of trans-translation. The protein is SsrA-binding protein of Alteromonas mediterranea (strain DSM 17117 / CIP 110805 / LMG 28347 / Deep ecotype).